The chain runs to 600 residues: Gamma-terpinene synthase, chloroplastic (600 aa).

A chloroplast-targeting transit peptide spans 1-40; sequence MALNLLSSLPAACNFTRLSLPLSSKVNGFVPPITQVQYPM. Mg(2+) contacts are provided by D353, D357, D498, and E506. Residues 353-357 carry the DDXXD motif motif; that stretch reads DDVYD.

It belongs to the terpene synthase family. The cofactor is Mn(2+). It depends on Mg(2+) as a cofactor.

Its subcellular location is the plastid. The protein resides in the chloroplast. The enzyme catalyses (2E)-geranyl diphosphate = gamma-terpinene + diphosphate. The protein operates within secondary metabolite biosynthesis; terpenoid biosynthesis. Its activity is regulated as follows. Inhibited by 100 mM KCl. In terms of biological role, monoterpene synthase which catalyzes the conversion of geranyl diphosphate to gamma-terpinene and the minor products limonene, alpha-pinene, beta-pinene, alpha-terpinolene, alpha-thujene, alpha-terpinene, myrcene and sabinene. This is Gamma-terpinene synthase, chloroplastic from Citrus limon (Lemon).